A 364-amino-acid polypeptide reads, in one-letter code: DNA polymerase IV (364 aa).

The UmuC domain maps to 14-198 (IIHIDMDAFF…LPIEKFHGVG (185 aa)). D18 and D116 together coordinate Mg(2+). The active site involves E117.

This sequence belongs to the DNA polymerase type-Y family. As to quaternary structure, monomer. It depends on Mg(2+) as a cofactor.

Its subcellular location is the cytoplasm. The catalysed reaction is DNA(n) + a 2'-deoxyribonucleoside 5'-triphosphate = DNA(n+1) + diphosphate. Its function is as follows. Poorly processive, error-prone DNA polymerase involved in untargeted mutagenesis. Copies undamaged DNA at stalled replication forks, which arise in vivo from mismatched or misaligned primer ends. These misaligned primers can be extended by PolIV. Exhibits no 3'-5' exonuclease (proofreading) activity. May be involved in translesional synthesis, in conjunction with the beta clamp from PolIII. The polypeptide is DNA polymerase IV (Streptococcus pyogenes serotype M18 (strain MGAS8232)).